The following is a 719-amino-acid chain: Histone-lysine N-methyltransferase SETDB2 (719 aa).

Over residues 72-82 the composition is skewed to polar residues; the sequence is SQKEVNAQSSD. Residues 72 to 102 form a disordered region; the sequence is SQKEVNAQSSDPMPVTQKEQENKSNAFPSTS. One can recognise an MBD domain in the interval 157–229; sequence LNLKGENPLQ…DNFSFNTYVQ (73 aa). In terms of domain architecture, Pre-SET spans 291–364; sequence DSCDCSEGCI…LCQNRVVQHG (74 aa). Zn(2+) is bound by residues C293, C295, C299, C305, C307, C345, C349, C351, and C356. The SET domain occupies 367–694; that stretch reads VRLQVFKTEQ…ARTELTWDYG (328 aa). Residues 377–379 and D418 contribute to the S-adenosyl-L-methionine site; that span reads KGW. The segment at 508–547 is disordered; sequence FVSSESVTPEDNDGFKPPREHLNSKTKGAQKDSSSNHVDE. The segment covering 520–530 has biased composition (basic and acidic residues); sequence DGFKPPREHLN. Over residues 532 to 543 the composition is skewed to polar residues; the sequence is KTKGAQKDSSSN. Residues R648 and 651–652 contribute to the S-adenosyl-L-methionine site; that span reads NH. Residues C654, C707, C709, and C714 each coordinate Zn(2+).

It belongs to the class V-like SAM-binding methyltransferase superfamily. Ubiquitous. Highest expression in heart, testis and ovary.

Its subcellular location is the nucleus. The protein resides in the chromosome. It catalyses the reaction N(6),N(6)-dimethyl-L-lysyl(9)-[histone H3] + S-adenosyl-L-methionine = N(6),N(6),N(6)-trimethyl-L-lysyl(9)-[histone H3] + S-adenosyl-L-homocysteine + H(+). Functionally, histone methyltransferase involved in left-right axis specification in early development and mitosis. Specifically trimethylates 'Lys-9' of histone H3 (H3K9me3). H3K9me3 is a specific tag for epigenetic transcriptional repression that recruits HP1 (CBX1, CBX3 and/or CBX5) proteins to methylated histones. Contributes to H3K9me3 in both the interspersed repetitive elements and centromere-associated repeats. Plays a role in chromosome condensation and segregation during mitosis. The protein is Histone-lysine N-methyltransferase SETDB2 (SETDB2) of Homo sapiens (Human).